The chain runs to 1098 residues: Gramicidin S synthase 1 (1098 aa).

Residues 538–612 (APRNEIEETL…QLVHYIKDSK (75 aa)) enclose the Carrier domain. Serine 573 carries the O-(pantetheine 4'-phosphoryl)serine modification.

It belongs to the ATP-dependent AMP-binding enzyme family. Large multienzyme complex of GrsA and GrsB. Pantetheine 4'-phosphate is required as a cofactor.

It carries out the reaction L-phenylalanine + ATP + H2O = D-phenylalanine + AMP + diphosphate + H(+). It participates in antibiotic biosynthesis; gramicidin S biosynthesis. In terms of biological role, in the first step of peptide synthesis this enzyme activates phenylalanine and racemizes it to the D-isomer. In Brevibacillus brevis (Bacillus brevis), this protein is Gramicidin S synthase 1 (grsA).